Reading from the N-terminus, the 453-residue chain is Prenyltransferase nscD (453 aa).

Arginine 118, lysine 200, tyrosine 202, lysine 271, tyrosine 273, and tyrosine 428 together coordinate dimethylallyl diphosphate.

The protein belongs to the tryptophan dimethylallyltransferase family.

The protein operates within secondary metabolite biosynthesis. In terms of biological role, prenyltransferase; part of the gene cluster that mediates the biosynthesis of neosartoricin, a prenylated anthracenone that exhibits T-cell antiproliferative activity, suggestive of a physiological role as an immunosuppressive agent. The non-reducing polyketide synthase nscA probably synthesizes and cyclizes the decaketide backbone. The hydrolase nscB then mediates the product release through hydrolysis followed by spontaneous decarboxylation. The prenyltransferase nscD catalyzes the addition of the dimethylallyl group to the aromatic C5. The FAD-dependent monooxygenase nscC is then responsible for the stereospecific hydroxylation at C2. There is no gene encoding O-acetyltransferase in the nsc gene cluster; thus, the last step of 2-O-acetylation leading to neosartoricin may be catalyzed by an unidentified O-acetyltransferase. In Aspergillus fumigatus (strain ATCC MYA-4609 / CBS 101355 / FGSC A1100 / Af293) (Neosartorya fumigata), this protein is Prenyltransferase nscD.